A 98-amino-acid chain; its full sequence is NADH-ubiquinone oxidoreductase chain 4L (98 aa).

Helical transmembrane passes span 1-21 (MSIT…GLLM), 29-49 (SLLC…MAIL), and 61-81 (IILL…LVMV).

This sequence belongs to the complex I subunit 4L family. In terms of assembly, core subunit of respiratory chain NADH dehydrogenase (Complex I) which is composed of 45 different subunits.

It localises to the mitochondrion inner membrane. It carries out the reaction a ubiquinone + NADH + 5 H(+)(in) = a ubiquinol + NAD(+) + 4 H(+)(out). In terms of biological role, core subunit of the mitochondrial membrane respiratory chain NADH dehydrogenase (Complex I) which catalyzes electron transfer from NADH through the respiratory chain, using ubiquinone as an electron acceptor. Part of the enzyme membrane arm which is embedded in the lipid bilayer and involved in proton translocation. The polypeptide is NADH-ubiquinone oxidoreductase chain 4L (MT-ND4L) (Mesophylla macconnelli (MacConnell's bat)).